Here is an 80-residue protein sequence, read N- to C-terminus: Exodeoxyribonuclease 7 small subunit (80 aa).

Belongs to the XseB family. In terms of assembly, heterooligomer composed of large and small subunits.

The protein resides in the cytoplasm. It carries out the reaction Exonucleolytic cleavage in either 5'- to 3'- or 3'- to 5'-direction to yield nucleoside 5'-phosphates.. In terms of biological role, bidirectionally degrades single-stranded DNA into large acid-insoluble oligonucleotides, which are then degraded further into small acid-soluble oligonucleotides. The chain is Exodeoxyribonuclease 7 small subunit from Citrobacter koseri (strain ATCC BAA-895 / CDC 4225-83 / SGSC4696).